A 476-amino-acid polypeptide reads, in one-letter code: MTWETVIGLEIHVQLNTKSKIFSGASTAFGAEPNAHASVVECALPGVLPVMNREVVEKAIKLGLALDAKINQKNVFDRKNYFYPDLPKGYQISQLDLPIVEHGKLEIVVGDDVKTINVTRAHMEEDAGKSVHEGLNSATGIDLNRAGTPLLEVVSEPEMHSAAEAVAYAKALHSLVTWLDICDGNMAEGSFRVDANVSVRPKGQAEFGTRREIKNLNSFRFLEQAINYEVEAQIEILEDGGKVQQATMLFDPEKGETRVMRLKEDAQDYRYFPDPDLLPVIISDAQMQKAKAEMPELPKEMAARFVADYGVSDYDARLLTASRAQAAYFEEAAKESGQGKPTANWMNGELAAALNKAGLELADSPITAPRLAALVGKIADGTLSSKLAKKAFEAMWAEPEATIAEIIEKHGLQQMTDTGAVEAIVDEVLANNAKAVEQFKSGNEKALNAIVGQVMKASKGKANPAQVQELIKAKLA.

Belongs to the GatB/GatE family. GatB subfamily. As to quaternary structure, heterotrimer of A, B and C subunits.

It catalyses the reaction L-glutamyl-tRNA(Gln) + L-glutamine + ATP + H2O = L-glutaminyl-tRNA(Gln) + L-glutamate + ADP + phosphate + H(+). It carries out the reaction L-aspartyl-tRNA(Asn) + L-glutamine + ATP + H2O = L-asparaginyl-tRNA(Asn) + L-glutamate + ADP + phosphate + 2 H(+). Allows the formation of correctly charged Asn-tRNA(Asn) or Gln-tRNA(Gln) through the transamidation of misacylated Asp-tRNA(Asn) or Glu-tRNA(Gln) in organisms which lack either or both of asparaginyl-tRNA or glutaminyl-tRNA synthetases. The reaction takes place in the presence of glutamine and ATP through an activated phospho-Asp-tRNA(Asn) or phospho-Glu-tRNA(Gln). This is Aspartyl/glutamyl-tRNA(Asn/Gln) amidotransferase subunit B from Neisseria meningitidis serogroup C (strain 053442).